The following is a 72-amino-acid chain: DNA-directed RNA polymerase subunit omega (72 aa).

The protein belongs to the RNA polymerase subunit omega family. The RNAP catalytic core consists of 2 alpha, 1 beta, 1 beta' and 1 omega subunit. When a sigma factor is associated with the core the holoenzyme is formed, which can initiate transcription.

It carries out the reaction RNA(n) + a ribonucleoside 5'-triphosphate = RNA(n+1) + diphosphate. In terms of biological role, promotes RNA polymerase assembly. Latches the N- and C-terminal regions of the beta' subunit thereby facilitating its interaction with the beta and alpha subunits. The chain is DNA-directed RNA polymerase subunit omega from Clostridium botulinum (strain Loch Maree / Type A3).